A 405-amino-acid chain; its full sequence is Imidazolonepropionase (405 aa).

Residues His72 and His74 each coordinate Fe(3+). Residues His72 and His74 each coordinate Zn(2+). 4-imidazolone-5-propanoate-binding residues include Arg81, Tyr144, and His177. Tyr144 contributes to the N-formimidoyl-L-glutamate binding site. His242 lines the Fe(3+) pocket. His242 is a binding site for Zn(2+). 4-imidazolone-5-propanoate is bound at residue Gln245. Asp317 is a binding site for Fe(3+). Residue Asp317 participates in Zn(2+) binding. Asn319 and Gly321 together coordinate N-formimidoyl-L-glutamate. Thr322 is a 4-imidazolone-5-propanoate binding site.

It belongs to the metallo-dependent hydrolases superfamily. HutI family. The cofactor is Zn(2+). Fe(3+) is required as a cofactor.

The protein resides in the cytoplasm. It carries out the reaction 4-imidazolone-5-propanoate + H2O = N-formimidoyl-L-glutamate. It participates in amino-acid degradation; L-histidine degradation into L-glutamate; N-formimidoyl-L-glutamate from L-histidine: step 3/3. Catalyzes the hydrolytic cleavage of the carbon-nitrogen bond in imidazolone-5-propanoate to yield N-formimidoyl-L-glutamate. It is the third step in the universal histidine degradation pathway. This is Imidazolonepropionase from Klebsiella pneumoniae (strain 342).